Reading from the N-terminus, the 268-residue chain is Large ribosomal subunit protein mL46 (268 aa).

Residues 1–25 (MYLKRNIINMQRSFSRQFHISVRNS) constitute a mitochondrion transit peptide.

This sequence belongs to the mitochondrion-specific ribosomal protein mL46 family. Component of the mitochondrial large ribosomal subunit (mt-LSU). Mature yeast 74S mitochondrial ribosomes consist of a small (37S) and a large (54S) subunit. The 37S small subunit contains a 15S ribosomal RNA (15S mt-rRNA) and at least 32 different proteins. The 54S large subunit contains a 21S rRNA (21S mt-rRNA) and at least 45 different proteins.

The protein resides in the mitochondrion. Functionally, component of the mitochondrial ribosome (mitoribosome), a dedicated translation machinery responsible for the synthesis of mitochondrial genome-encoded proteins, including at least some of the essential transmembrane subunits of the mitochondrial respiratory chain. The mitoribosomes are attached to the mitochondrial inner membrane and translation products are cotranslationally integrated into the membrane. This chain is Large ribosomal subunit protein mL46 (mrpl17), found in Schizosaccharomyces pombe (strain 972 / ATCC 24843) (Fission yeast).